Consider the following 116-residue polypeptide: uncharacterized protein (116 aa).

This is an uncharacterized protein from Acidianus filamentous virus 2 (isolate Italy/Pozzuoli) (AFV-2).